Consider the following 627-residue polypeptide: Membrane protein insertase YidC (627 aa).

A helical membrane pass occupies residues 8–28; that stretch reads LFLALILSMGIWMGVNYFFFP. Polar residues predominate over residues 33-57; that stretch reads KKNTETKQTQSDKTSENTKQQITSG. The segment at 33–68 is disordered; that stretch reads KKNTETKQTQSDKTSENTKQQITSGKTKESNSADPV. A compositionally biased stretch (basic and acidic residues) spans 58–68; it reads KTKESNSADPV. The next 4 membrane-spanning stretches (helical) occupy residues 417–437, 488–508, 536–556, and 575–595; these read FTIP…KLVF, VGGC…YTAF, AIPY…LMVG, and MLMY…PSGV.

Belongs to the OXA1/ALB3/YidC family. Type 1 subfamily. Interacts with the Sec translocase complex via SecD. Specifically interacts with transmembrane segments of nascent integral membrane proteins during membrane integration.

Its subcellular location is the cell inner membrane. Required for the insertion and/or proper folding and/or complex formation of integral membrane proteins into the membrane. Involved in integration of membrane proteins that insert both dependently and independently of the Sec translocase complex, as well as at least some lipoproteins. Aids folding of multispanning membrane proteins. The polypeptide is Membrane protein insertase YidC (Leptospira interrogans serogroup Icterohaemorrhagiae serovar copenhageni (strain Fiocruz L1-130)).